The sequence spans 296 residues: Protoheme IX farnesyltransferase (296 aa).

8 helical membrane passes run 8–28 (VTKP…FFLA), 35–55 (WILM…GCAI), 84–104 (AAFF…SYFT), 107–127 (VAVA…TMYF), 132–152 (VYGT…GYCA), 162–182 (AILL…IAIF), 215–235 (FAVV…FMVV), and 264–284 (VFFF…LDFN).

This sequence belongs to the UbiA prenyltransferase family. Protoheme IX farnesyltransferase subfamily.

It is found in the cell inner membrane. It carries out the reaction heme b + (2E,6E)-farnesyl diphosphate + H2O = Fe(II)-heme o + diphosphate. Its pathway is porphyrin-containing compound metabolism; heme O biosynthesis; heme O from protoheme: step 1/1. Functionally, converts heme B (protoheme IX) to heme O by substitution of the vinyl group on carbon 2 of heme B porphyrin ring with a hydroxyethyl farnesyl side group. This is Protoheme IX farnesyltransferase from Marinomonas sp. (strain MWYL1).